Reading from the N-terminus, the 177-residue chain is Inorganic pyrophosphatase (177 aa).

3 residues coordinate substrate: K34, R48, and Y60. Residues D70, D75, and D107 each coordinate Mg(2+). Position 144 (Y144) interacts with substrate.

This sequence belongs to the PPase family. Homohexamer. It depends on Mg(2+) as a cofactor.

The protein resides in the cytoplasm. It carries out the reaction diphosphate + H2O = 2 phosphate + H(+). Its function is as follows. Catalyzes the hydrolysis of inorganic pyrophosphate (PPi) forming two phosphate ions. The sequence is that of Inorganic pyrophosphatase from Picrophilus torridus (strain ATCC 700027 / DSM 9790 / JCM 10055 / NBRC 100828 / KAW 2/3).